We begin with the raw amino-acid sequence, 123 residues long: uncharacterized protein (123 aa).

Residues 5-25 (GTLVIIFAIVLILCIMLLFFY) traverse the membrane as a helical segment. Residues 32–53 (KSGVLPPPIPPPTPPPPKKKYD) form a disordered region. The segment covering 36–47 (LPPPIPPPTPPP) has biased composition (pro residues).

It belongs to the asfivirus CP123L family.

Its subcellular location is the host membrane. It localises to the virion. This is an uncharacterized protein from Ornithodoros (relapsing fever ticks).